A 350-amino-acid polypeptide reads, in one-letter code: Methylthioribose-1-phosphate isomerase (350 aa).

Residues 47 to 49 (RGA), arginine 90, and glutamine 197 contribute to the substrate site. Residue aspartate 238 is the Proton donor of the active site. 248-249 (NK) contributes to the substrate binding site.

It belongs to the eIF-2B alpha/beta/delta subunits family. MtnA subfamily.

The enzyme catalyses 5-(methylsulfanyl)-alpha-D-ribose 1-phosphate = 5-(methylsulfanyl)-D-ribulose 1-phosphate. It participates in amino-acid biosynthesis; L-methionine biosynthesis via salvage pathway; L-methionine from S-methyl-5-thio-alpha-D-ribose 1-phosphate: step 1/6. Its function is as follows. Catalyzes the interconversion of methylthioribose-1-phosphate (MTR-1-P) into methylthioribulose-1-phosphate (MTRu-1-P). The sequence is that of Methylthioribose-1-phosphate isomerase from Nitratidesulfovibrio vulgaris (strain DP4) (Desulfovibrio vulgaris).